A 254-amino-acid chain; its full sequence is uncharacterized protein (254 aa).

A coiled-coil region spans residues 66-111 (DMVSEMNKRMDDLAARIVVLEDEKAELRRINQRLTEKVRDKDMEKA).

This is an uncharacterized protein from Ostreid herpesvirus 1 (isolate France) (OsHV-1).